A 930-amino-acid polypeptide reads, in one-letter code: Isoleucine--tRNA ligase (930 aa).

A 'HIGH' region motif is present at residues 57 to 67 (PYANGNIHVGH). Residue E554 participates in L-isoleucyl-5'-AMP binding. The 'KMSKS' region motif lies at 595–599 (KMSKS). ATP is bound at residue K598. Zn(2+) is bound by residues C888, C891, C908, and C911.

This sequence belongs to the class-I aminoacyl-tRNA synthetase family. IleS type 1 subfamily. In terms of assembly, monomer. The cofactor is Zn(2+).

Its subcellular location is the cytoplasm. It carries out the reaction tRNA(Ile) + L-isoleucine + ATP = L-isoleucyl-tRNA(Ile) + AMP + diphosphate. Its function is as follows. Catalyzes the attachment of isoleucine to tRNA(Ile). As IleRS can inadvertently accommodate and process structurally similar amino acids such as valine, to avoid such errors it has two additional distinct tRNA(Ile)-dependent editing activities. One activity is designated as 'pretransfer' editing and involves the hydrolysis of activated Val-AMP. The other activity is designated 'posttransfer' editing and involves deacylation of mischarged Val-tRNA(Ile). The chain is Isoleucine--tRNA ligase from Streptococcus pneumoniae (strain Taiwan19F-14).